Here is a 91-residue protein sequence, read N- to C-terminus: Small ribosomal subunit protein uS15c (91 aa).

The protein belongs to the universal ribosomal protein uS15 family. Part of the 30S ribosomal subunit.

It is found in the plastid. It localises to the chloroplast. The chain is Small ribosomal subunit protein uS15c (rps15) from Cicer arietinum (Chickpea).